Here is a 357-residue protein sequence, read N- to C-terminus: NADH-quinone oxidoreductase subunit H (357 aa).

The next 8 helical transmembrane spans lie at 20-40 (WLVL…ILCV), 92-112 (ILFV…WAVV), 127-147 (LLYV…AGWA), 165-185 (VSYE…SGSL), 206-226 (FLSW…ISAV), 254-274 (MAFA…SCMA), 294-314 (IPGW…FVWF), and 329-349 (LGWK…AIWM).

Belongs to the complex I subunit 1 family. As to quaternary structure, NDH-1 is composed of 14 different subunits. Subunits NuoA, H, J, K, L, M, N constitute the membrane sector of the complex.

It is found in the cell inner membrane. It catalyses the reaction a quinone + NADH + 5 H(+)(in) = a quinol + NAD(+) + 4 H(+)(out). Functionally, NDH-1 shuttles electrons from NADH, via FMN and iron-sulfur (Fe-S) centers, to quinones in the respiratory chain. The immediate electron acceptor for the enzyme in this species is believed to be ubiquinone. Couples the redox reaction to proton translocation (for every two electrons transferred, four hydrogen ions are translocated across the cytoplasmic membrane), and thus conserves the redox energy in a proton gradient. This subunit may bind ubiquinone. This is NADH-quinone oxidoreductase subunit H from Bordetella petrii (strain ATCC BAA-461 / DSM 12804 / CCUG 43448).